The sequence spans 765 residues: 5-methyltetrahydropteroyltriglutamate--homocysteine methyltransferase (765 aa).

Residues 16 to 19 and K121 contribute to the 5-methyltetrahydropteroyltri-L-glutamate site; that span reads RELK. L-homocysteine is bound by residues 441–443 and E494; that span reads IGS. L-methionine contacts are provided by residues 441-443 and E494; that span reads IGS. 5-methyltetrahydropteroyltri-L-glutamate contacts are provided by residues 525 to 526 and W571; that span reads RC. D609 is a binding site for L-homocysteine. D609 provides a ligand contact to L-methionine. 5-methyltetrahydropteroyltri-L-glutamate is bound at residue E615. 3 residues coordinate Zn(2+): H651, C653, and E675. H704 (proton donor) is an active-site residue. C736 provides a ligand contact to Zn(2+).

The protein belongs to the vitamin-B12 independent methionine synthase family. It depends on Zn(2+) as a cofactor.

It catalyses the reaction 5-methyltetrahydropteroyltri-L-glutamate + L-homocysteine = tetrahydropteroyltri-L-glutamate + L-methionine. Its pathway is amino-acid biosynthesis; L-methionine biosynthesis via de novo pathway; L-methionine from L-homocysteine (MetE route): step 1/1. Its function is as follows. Catalyzes the transfer of a methyl group from 5-methyltetrahydrofolate to homocysteine resulting in methionine formation. The polypeptide is 5-methyltetrahydropteroyltriglutamate--homocysteine methyltransferase (Saccharophagus degradans (strain 2-40 / ATCC 43961 / DSM 17024)).